Consider the following 232-residue polypeptide: Ubiquitin-conjugating enzyme E2-24 kDa (232 aa).

Residues 1 to 37 (MSSTPAAGSAAEVATSSATSNAPSAPSTTASNVSNTS) are compositionally biased toward low complexity. Residues 1–87 (MSSTPAAGSA…PRISRALGTS (87 aa)) are disordered. Positions 58–67 (GASGSNAGGG) are enriched in gly residues. The 147-residue stretch at 86-232 (TSAKRIQKEL…ARLWTKRYAT (147 aa)) folds into the UBC core domain. Catalysis depends on C170, which acts as the Glycyl thioester intermediate.

Belongs to the ubiquitin-conjugating enzyme family.

The enzyme catalyses S-ubiquitinyl-[E1 ubiquitin-activating enzyme]-L-cysteine + [E2 ubiquitin-conjugating enzyme]-L-cysteine = [E1 ubiquitin-activating enzyme]-L-cysteine + S-ubiquitinyl-[E2 ubiquitin-conjugating enzyme]-L-cysteine.. Its pathway is protein modification; protein ubiquitination. Catalyzes the covalent attachment of ubiquitin to other proteins. This chain is Ubiquitin-conjugating enzyme E2-24 kDa, found in Drosophila melanogaster (Fruit fly).